The following is a 149-amino-acid chain: Deoxyuridine 5'-triphosphate nucleotidohydrolase (149 aa).

Substrate is bound by residues 68-70, N81, and 85-87; these read RSG and LID.

Belongs to the dUTPase family. Mg(2+) is required as a cofactor.

The catalysed reaction is dUTP + H2O = dUMP + diphosphate + H(+). It participates in pyrimidine metabolism; dUMP biosynthesis; dUMP from dCTP (dUTP route): step 2/2. In terms of biological role, this enzyme is involved in nucleotide metabolism: it produces dUMP, the immediate precursor of thymidine nucleotides and it decreases the intracellular concentration of dUTP so that uracil cannot be incorporated into DNA. This Nitrosospira multiformis (strain ATCC 25196 / NCIMB 11849 / C 71) protein is Deoxyuridine 5'-triphosphate nucleotidohydrolase.